A 339-amino-acid chain; its full sequence is Deoxyguanosinetriphosphate triphosphohydrolase-like protein (339 aa).

Residues 75-186 enclose the HD domain; that stretch reads RLTHTLEVAQ…VQISDKIAYI (112 aa).

It belongs to the dGTPase family. Type 2 subfamily.

This Caldanaerobacter subterraneus subsp. tengcongensis (strain DSM 15242 / JCM 11007 / NBRC 100824 / MB4) (Thermoanaerobacter tengcongensis) protein is Deoxyguanosinetriphosphate triphosphohydrolase-like protein.